A 252-amino-acid chain; its full sequence is Probable transcriptional regulatory protein Bcav_1989 (252 aa).

Belongs to the TACO1 family.

It is found in the cytoplasm. This chain is Probable transcriptional regulatory protein Bcav_1989, found in Beutenbergia cavernae (strain ATCC BAA-8 / DSM 12333 / CCUG 43141 / JCM 11478 / NBRC 16432 / NCIMB 13614 / HKI 0122).